A 286-amino-acid polypeptide reads, in one-letter code: Shikimate dehydrogenase (NADP(+)) (286 aa).

Shikimate-binding positions include 22 to 24 (SRS) and Thr71. The active-site Proton acceptor is Lys75. Glu87 contacts NADP(+). The shikimate site is built by Asn96 and Asp111. Residues 136–140 (GAGGA), 160–165 (NRTPER), and Ile225 contribute to the NADP(+) site. Tyr227 contributes to the shikimate binding site. Gly248 contacts NADP(+).

Belongs to the shikimate dehydrogenase family. In terms of assembly, homodimer.

It carries out the reaction shikimate + NADP(+) = 3-dehydroshikimate + NADPH + H(+). Its pathway is metabolic intermediate biosynthesis; chorismate biosynthesis; chorismate from D-erythrose 4-phosphate and phosphoenolpyruvate: step 4/7. In terms of biological role, involved in the biosynthesis of the chorismate, which leads to the biosynthesis of aromatic amino acids. Catalyzes the reversible NADPH linked reduction of 3-dehydroshikimate (DHSA) to yield shikimate (SA). The protein is Shikimate dehydrogenase (NADP(+)) of Rhizobium meliloti (strain 1021) (Ensifer meliloti).